Reading from the N-terminus, the 80-residue chain is UPF0512 protein J (80 aa).

The protein belongs to the UPF0512 family.

In Dictyostelium discoideum (Social amoeba), this protein is UPF0512 protein J.